A 140-amino-acid chain; its full sequence is Profilin-2 (140 aa).

At Ala-2 the chain carries N-acetylalanine.

The protein belongs to the profilin family. In terms of assembly, occurs in many kinds of cells as a complex with monomeric actin in a 1:1 ratio. Interacts with PFN2. As to quaternary structure, interacts with ACTMAP (via N-terminus); the interaction may facilitate efficient cleavage of the acetylated N-terminus of immature actin by ACTMAP. Highly expressed in brain, skeletal muscle and kidney and less strongly in heart, placenta, lung and liver.

It localises to the cytoplasm. The protein localises to the cytoskeleton. Functionally, binds to actin and affects the structure of the cytoskeleton. At high concentrations, profilin prevents the polymerization of actin, whereas it enhances it at low concentrations. By binding to PIP2, it inhibits the formation of IP3 and DG. The sequence is that of Profilin-2 (PFN2) from Homo sapiens (Human).